Reading from the N-terminus, the 689-residue chain is MIESYLAFIFLNKVNKKKAPSLDSLGYEEIKKRHDELVKLIRKYDYAYYVEAHPLVSDQEYDNLYHELETLEKLHPELITPDSPTQRIGETPLSGFSQVTHEIPMLSLENTYSKEELFAFLERIKRALPGKKISFTVEPKIDGVSISAVYKNGLFSLGATRGNGTVGDDITQNLKTIRSLPLRLETPDPPEYLEVRGEAYMSPKDFERLNAQREKEGKVLFANPRNATAGSLKQLDPRVVAERPLAVVFYGAGKLVGMKCKTQEEWLNFLKKIGLPIPIVFWVCSNENEVYEAIGKLNECRNQLPYPTDGAAVKVNEWEYYSLLGYTAKAPRWAFAYKYGAERAKTRLNNVIFQVGRSGTITPVAEMDPVFLSGTTVSRATLHNFDQVKRLDVKIGDVVYLEKAGEVIPEVVGVDLNQRRGTEKEIVPPEFCPSCGEKLSWEGIFLRCENENCPAQLKERILHFAQRNAMDIQGLGESLVDQLVDKGIVKDVADIYDLDEETLVNLDRMGKKSAQNLLKAIEESKKKDLSRLIFGLGIPHIGQKASEDLARYFGTMDKLSHATEEELLNLPFIGEIMARSIVNYFRKEANRRRLEKLRKKGLNFVSTLSQASSGTLSGKTFVITGTLSEPRESIAQKIISKGGRVSNSLSRKTSYLVVGSDPGSKLQEAKKLGIPLINEQELLEMLHGG.

NAD(+)-binding positions include 58–62 (DQEYD), 107–108 (SL), and glutamate 138. The active-site N6-AMP-lysine intermediate is lysine 140. Residues arginine 161, glutamate 198, lysine 314, and lysine 338 each coordinate NAD(+). Zn(2+) contacts are provided by cysteine 432, cysteine 435, cysteine 448, and cysteine 453. Positions 611-689 (ASSGTLSGKT…QELLEMLHGG (79 aa)) constitute a BRCT domain.

This sequence belongs to the NAD-dependent DNA ligase family. LigA subfamily. Mg(2+) serves as cofactor. Mn(2+) is required as a cofactor.

It catalyses the reaction NAD(+) + (deoxyribonucleotide)n-3'-hydroxyl + 5'-phospho-(deoxyribonucleotide)m = (deoxyribonucleotide)n+m + AMP + beta-nicotinamide D-nucleotide.. DNA ligase that catalyzes the formation of phosphodiester linkages between 5'-phosphoryl and 3'-hydroxyl groups in double-stranded DNA using NAD as a coenzyme and as the energy source for the reaction. It is essential for DNA replication and repair of damaged DNA. This Methylacidiphilum infernorum (isolate V4) (Methylokorus infernorum (strain V4)) protein is DNA ligase.